The sequence spans 369 residues: Anhydro-N-acetylmuramic acid kinase (369 aa).

An ATP-binding site is contributed by G12–D19.

This sequence belongs to the anhydro-N-acetylmuramic acid kinase family.

The catalysed reaction is 1,6-anhydro-N-acetyl-beta-muramate + ATP + H2O = N-acetyl-D-muramate 6-phosphate + ADP + H(+). It participates in amino-sugar metabolism; 1,6-anhydro-N-acetylmuramate degradation. It functions in the pathway cell wall biogenesis; peptidoglycan recycling. Functionally, catalyzes the specific phosphorylation of 1,6-anhydro-N-acetylmuramic acid (anhMurNAc) with the simultaneous cleavage of the 1,6-anhydro ring, generating MurNAc-6-P. Is required for the utilization of anhMurNAc either imported from the medium or derived from its own cell wall murein, and thus plays a role in cell wall recycling. This chain is Anhydro-N-acetylmuramic acid kinase, found in Shewanella baltica (strain OS185).